Reading from the N-terminus, the 283-residue chain is uncharacterized protein (283 aa).

3 consecutive transmembrane segments (helical) span residues 18–38, 61–81, and 94–114; these read VYDI…AKLI, VIYF…LGLD, and IVLG…IFLI.

It belongs to the MscS (TC 1.A.23) family.

It is found in the cell membrane. This is an uncharacterized protein from Archaeoglobus fulgidus (strain ATCC 49558 / DSM 4304 / JCM 9628 / NBRC 100126 / VC-16).